A 147-amino-acid chain; its full sequence is MVHFTTEEKAAVASLWAKVNVEVVGGESLARLLIVYPWTQRFFDSFGNLYSESAIMGNPKVKAHGRKVLNSFGNAIEHMDDLKGTFADLSELHCDKLHVDPENFRLLGNMILIVLATHFSKEFTPQMQASWQKLTNAVANALAHKYH.

The Globin domain occupies 3-147 (HFTTEEKAAV…VANALAHKYH (145 aa)). Heme b is bound by residues histidine 64 and histidine 93.

It belongs to the globin family. In terms of tissue distribution, red blood cells.

Functionally, hemoglobin epsilon chain is a beta-type chain found in early embryos. The sequence is that of Hemoglobin subunit epsilon-4 (HBE4) from Bos taurus (Bovine).